The following is a 327-amino-acid chain: Microtubule-associated protein RP/EB family member 2 (327 aa).

Residues 1–17 show a composition bias toward polar residues; sequence MPGPTQTLSPNGENNND. The segment at 1–20 is disordered; sequence MPGPTQTLSPNGENNNDVIH. Positions 56-158 constitute a Calponin-homology (CH) domain; the sequence is TMSRHDIIAW…FIQWFKKFFD (103 aa). Disordered regions lie at residues 170–238 and 295–327; these read EARQ…DKDL and LYSSEEQESHTEQHEGEEEQEHGHEEAEQQEEY. Residues 234–304 enclose the EB1 C-terminal domain; it reads SDKDLETQVS…LYSSEEQESH (71 aa).

The protein belongs to the MAPRE family.

The protein resides in the cytoplasm. Its subcellular location is the cytoskeleton. Its function is as follows. May be involved in microtubule polymerization, and spindle function by stabilizing microtubules and anchoring them at centrosomes. This chain is Microtubule-associated protein RP/EB family member 2 (mapre2), found in Xenopus laevis (African clawed frog).